Here is a 493-residue protein sequence, read N- to C-terminus: Matrilin-1 (493 aa).

Positions 1-23 (MDGIFCALPLSLLLLLQSCGVWG) are cleaved as a signal peptide. In terms of domain architecture, VWFA 1 spans 24-220 (APPQPRGTLC…THKFQEAFCV (197 aa)). N74 is a glycosylation site (N-linked (GlcNAc...) asparagine). Positions 221–261 (VSDLCATGDHDCEQICISTPGSYKCACKEGFTLNNDGKTCS) constitute an EGF-like domain. 3 disulfides stabilise this stretch: C225–C236, C232–C245, and C247–C260. In terms of domain architecture, VWFA 2 spans 262–450 (ACSGGSGSAL…GKKLQMKICV (189 aa)). Positions 462–492 (KFQTKVEELINTLQQKLEAVAKRIEALENKI) form a coiled coil.

Homotrimer. Expressed in xyphoid cartilage and chondrocytes (at protein level).

The protein localises to the secreted. It localises to the extracellular space. The protein resides in the extracellular matrix. Its function is as follows. A major component of the extracellular matrix of non-articular cartilage. Binds to type 2 collagens and forms long concatenated protein networks as part of the extracellular matrix. Required for the network-like organization and bundling of collagen fibrils surrounding chondrocytes in the zones of maturation and hypertrophy. Required for mechanotransduction and adaption to mechanical loading in cartilage chondrocytes, resulting in an increase in expression of the extracellular matrix components ACAN and COL2A1. Acts as a moderator of angiogenesis in response to injury. In Gallus gallus (Chicken), this protein is Matrilin-1.